The primary structure comprises 256 residues: Enolase-phosphatase E1 (256 aa).

Positions 14 and 16 each coordinate Mg(2+). Residues 142-143 (SS) and Lys176 contribute to the substrate site. Asp201 is a binding site for Mg(2+).

Belongs to the HAD-like hydrolase superfamily. MasA/MtnC family. Monomer. Mg(2+) is required as a cofactor.

Its subcellular location is the cytoplasm. It is found in the nucleus. It catalyses the reaction 5-methylsulfanyl-2,3-dioxopentyl phosphate + H2O = 1,2-dihydroxy-5-(methylsulfanyl)pent-1-en-3-one + phosphate. The protein operates within amino-acid biosynthesis; L-methionine biosynthesis via salvage pathway; L-methionine from S-methyl-5-thio-alpha-D-ribose 1-phosphate: step 3/6. It participates in amino-acid biosynthesis; L-methionine biosynthesis via salvage pathway; L-methionine from S-methyl-5-thio-alpha-D-ribose 1-phosphate: step 4/6. Functionally, bifunctional enzyme that catalyzes the enolization of 2,3-diketo-5-methylthiopentyl-1-phosphate (DK-MTP-1-P) into the intermediate 2-hydroxy-3-keto-5-methylthiopentenyl-1-phosphate (HK-MTPenyl-1-P), which is then dephosphorylated to form the acireductone 1,2-dihydroxy-3-keto-5-methylthiopentene (DHK-MTPene). The protein is Enolase-phosphatase E1 of Drosophila sechellia (Fruit fly).